A 196-amino-acid chain; its full sequence is ATP-dependent Clp protease proteolytic subunit (196 aa).

Ser-96 serves as the catalytic Nucleophile. The active site involves His-121.

This sequence belongs to the peptidase S14 family. As to quaternary structure, fourteen ClpP subunits assemble into 2 heptameric rings which stack back to back to give a disk-like structure with a central cavity, resembling the structure of eukaryotic proteasomes.

It is found in the cytoplasm. It catalyses the reaction Hydrolysis of proteins to small peptides in the presence of ATP and magnesium. alpha-casein is the usual test substrate. In the absence of ATP, only oligopeptides shorter than five residues are hydrolyzed (such as succinyl-Leu-Tyr-|-NHMec, and Leu-Tyr-Leu-|-Tyr-Trp, in which cleavage of the -Tyr-|-Leu- and -Tyr-|-Trp bonds also occurs).. Its function is as follows. Cleaves peptides in various proteins in a process that requires ATP hydrolysis. Has a chymotrypsin-like activity. Plays a major role in the degradation of misfolded proteins. The sequence is that of ATP-dependent Clp protease proteolytic subunit from Streptococcus pneumoniae (strain 70585).